We begin with the raw amino-acid sequence, 369 residues long: Phenylalanine--tRNA ligase alpha subunit (369 aa).

Glutamate 269 contacts Mg(2+).

This sequence belongs to the class-II aminoacyl-tRNA synthetase family. Phe-tRNA synthetase alpha subunit type 1 subfamily. As to quaternary structure, tetramer of two alpha and two beta subunits. Mg(2+) is required as a cofactor.

The protein resides in the cytoplasm. The catalysed reaction is tRNA(Phe) + L-phenylalanine + ATP = L-phenylalanyl-tRNA(Phe) + AMP + diphosphate + H(+). This chain is Phenylalanine--tRNA ligase alpha subunit, found in Nitrobacter winogradskyi (strain ATCC 25391 / DSM 10237 / CIP 104748 / NCIMB 11846 / Nb-255).